The following is a 364-amino-acid chain: tRNA N6-adenosine threonylcarbamoyltransferase (364 aa).

Fe cation is bound by residues histidine 118 and histidine 122. Substrate is bound by residues 140–144 (LVSGG), aspartate 173, glycine 186, and asparagine 288. A Fe cation-binding site is contributed by aspartate 316.

This sequence belongs to the KAE1 / TsaD family. It depends on Fe(2+) as a cofactor.

It localises to the cytoplasm. It catalyses the reaction L-threonylcarbamoyladenylate + adenosine(37) in tRNA = N(6)-L-threonylcarbamoyladenosine(37) in tRNA + AMP + H(+). Functionally, required for the formation of a threonylcarbamoyl group on adenosine at position 37 (t(6)A37) in tRNAs that read codons beginning with adenine. Is involved in the transfer of the threonylcarbamoyl moiety of threonylcarbamoyl-AMP (TC-AMP) to the N6 group of A37, together with TsaE and TsaB. TsaD likely plays a direct catalytic role in this reaction. The chain is tRNA N6-adenosine threonylcarbamoyltransferase from Cereibacter sphaeroides (strain KD131 / KCTC 12085) (Rhodobacter sphaeroides).